The primary structure comprises 337 residues: MATASPAADGGRGRPWEGGLVSWPPAPPLTIPWTWMGPSWGQHPGHWGFPALTEPSASPAASLGIFEVRRVLDASGCSMLAPLQTGAARFSSYLLSRARKVLGSHLFSPCGVPEFCSISTRKLAAHSFGASMAAMMSFPPQRYHYFLVLDFEATCDKPQIHPQEIIEFPILKLNGRTMEIESTFHMYVQPVVHPQLTPFCTELTGIIQAMVDGQPSLQQVLERVDEWMAKEGLLDPNVKSIFVTCGDWDLKVMLPGQCQYLGLPVADYFKQWINLKKAYSFAMGCWPKNGLLDMNKGLSLQHIGRPHSGIDDCKNIANIMKTLAYRGFIFKQTSKPF.

The Exonuclease domain occupies 146 to 320 (FLVLDFEATC…DDCKNIANIM (175 aa)). The Mg(2+) site is built by aspartate 150, glutamate 152, and aspartate 249. Glutamate 152 serves as the catalytic Proton acceptor. AMP is bound at residue glutamate 152. Histidine 307 functions as the Proton acceptor in the catalytic mechanism. Histidine 307 is a binding site for AMP. Aspartate 312 provides a ligand contact to Mg(2+).

As to quaternary structure, interacts with PRNP. The cofactor is Mg(2+).

In Bos taurus (Bovine), this protein is ERI1 exoribonuclease 3 (ERI3).